The primary structure comprises 471 residues: Acetylcholinesterase collagenic tail peptide (471 aa).

The N-terminal stretch at 1–30 (MLGILLQKATATLASGLNSSRAGMFPIALG) is a signal peptide. Residues 70–86 (CCLLTPPPPPMFPPPFF) are PRAD. 2 consecutive Collagen-like domains span residues 118–282 (GPPG…SGLP) and 293–307 (GPKG…VGRC). 2 disordered regions span residues 140 to 205 (EIGE…GEKG) and 237 to 267 (KGVS…IGPP). Low complexity-rich tracts occupy residues 155 to 164 (VRGPRGMPGS) and 242 to 251 (APGHRGPVGR). 2 tandem repeats follow at residues 388–413 (FCGD…TDSC) and 420–443 (YCGD…YHTC). The tract at residues 388–443 (FCGDEIVQVENGEECDDGNRIVTDSCINCKQAYCGDGYLQSGLEECDGKDFGYHTC) is 2 X 26 AA approximate repeats.

Belongs to the COLQ family. As to quaternary structure, the asymmetric form of AChE is a disulfide-bonded oligomer composed of a collagenic subunit (Q) and a variable number of asymmetric (T) catalytic subunits. The N-terminal of the collagenic subunit (Q) associates with the C-terminal of the catalytic subunit (T). Expressed in electric organs but not in muscle.

It localises to the synapse. In terms of biological role, anchors the catalytic subunits of asymmetric AChE to the synaptic basal lamina. The sequence is that of Acetylcholinesterase collagenic tail peptide from Torpedo marmorata (Marbled electric ray).